The sequence spans 219 residues: MAGPDDQHLSGMRVEYGSVEKDGSPDLDTDWLYDGWLTLFCKWIDDAERAGVAEPNAMVLATVANGRPVSRSVLCKGADEAGIIFFTNYDSDKGDDLAATPYASVTFPWYQLGRQVHIRGPVSTVDPQVSEDYWSKRPRGSQLGAWASHQSRPIASRTALLDQLLEVTVRFADSELIPLPPNWGGYLIVPEVVEFWQGRENRVHNRIRVTGGCIERLQP.

Residues 13-16 (RVEY) and Lys-76 contribute to the substrate site. FMN is bound by residues 71–76 (RSVLCK), 86–87 (FT), Lys-93, and Gln-115. 3 residues coordinate substrate: Tyr-133, Arg-137, and Ser-141. Residues 150–151 (QS) and Trp-196 each bind FMN. Position 202–204 (202–204 (RVH)) interacts with substrate. Position 206 (Arg-206) interacts with FMN.

It belongs to the pyridoxamine 5'-phosphate oxidase family. In terms of assembly, homodimer. The cofactor is FMN.

It catalyses the reaction pyridoxamine 5'-phosphate + O2 + H2O = pyridoxal 5'-phosphate + H2O2 + NH4(+). The catalysed reaction is pyridoxine 5'-phosphate + O2 = pyridoxal 5'-phosphate + H2O2. It functions in the pathway cofactor metabolism; pyridoxal 5'-phosphate salvage; pyridoxal 5'-phosphate from pyridoxamine 5'-phosphate: step 1/1. Its pathway is cofactor metabolism; pyridoxal 5'-phosphate salvage; pyridoxal 5'-phosphate from pyridoxine 5'-phosphate: step 1/1. Catalyzes the oxidation of either pyridoxine 5'-phosphate (PNP) or pyridoxamine 5'-phosphate (PMP) into pyridoxal 5'-phosphate (PLP). The sequence is that of Pyridoxine/pyridoxamine 5'-phosphate oxidase from Mycobacterium leprae (strain TN).